The chain runs to 525 residues: MGKNTKAKKRAASLEVLASKSSPILEFVFDEPLIHVACHPEQPIVVCAIATGHVFCCKYDAKALKRILNKNEAKLAALENKDDQKRKRFWKLIKLKAEMDTYELEEGEETAAVELLWKTRRHKGSVRGMSFNNDGSKLYTIGIDNVLKKANSLTGKVMKKVTLPLSSEKNHYTKLVTSKTHPFLLLGDELGNIHVLNNDTLQLQNTIKSIHNGDAINDIFQFVGKSVYKFISLGQTTLAYWDSRESNESDASIPADDLDAKRKVYVSDDQEDEMICGSFVNPEDGDILVCGMGEGVLTVWKPKKNDLVDQVTRIPICKNESVDCVISSFQDDNCVYCGCSNGNVYKVNVKLGKVIEIRKHSSIDEVSFIDLDYEYRVLSAGMDKVKLWDIVDEDDDEEGKINESYSNSESDNDNGFDSDADSNSDSESVSSSDVDSASDDEENSKSESEANESDVEETLVGLSKDELLAELEKDLQSSDEDSKHYTKRTKSTQPKKLKKQKKELNNKQLRNLQKHEHGIRKFEGL.

WD repeat units follow at residues 28–69 (VFDE…RILN), 121–160 (RHKG…VMKK), 211–251 (HNGD…ESDA), 270–310 (QEDE…LVDQ), and 358–398 (RKHS…DDEE). Positions 396–525 (DEEGKINESY…EHGIRKFEGL (130 aa)) are disordered. The span at 410 to 424 (SDNDNGFDSDADSNS) shows a compositional bias: acidic residues. Residues 425–435 (DSESVSSSDVD) show a composition bias toward low complexity. Residues 463-484 (SKDELLAELEKDLQSSDEDSKH) are compositionally biased toward basic and acidic residues. The span at 485-501 (YTKRTKSTQPKKLKKQK) shows a compositional bias: basic residues. Basic and acidic residues predominate over residues 513–525 (QKHEHGIRKFEGL).

The protein belongs to the WD repeat WDR55 family.

Its subcellular location is the nucleus. It localises to the nucleolus. This is WD repeat-containing protein JIP5 (JIP5) from Kluyveromyces lactis (strain ATCC 8585 / CBS 2359 / DSM 70799 / NBRC 1267 / NRRL Y-1140 / WM37) (Yeast).